The chain runs to 156 residues: Small ribosomal subunit protein uS7 (156 aa).

Belongs to the universal ribosomal protein uS7 family. In terms of assembly, part of the 30S ribosomal subunit. Contacts proteins S9 and S11.

Functionally, one of the primary rRNA binding proteins, it binds directly to 16S rRNA where it nucleates assembly of the head domain of the 30S subunit. Is located at the subunit interface close to the decoding center, probably blocks exit of the E-site tRNA. This is Small ribosomal subunit protein uS7 from Kocuria rhizophila (strain ATCC 9341 / DSM 348 / NBRC 103217 / DC2201).